A 672-amino-acid chain; its full sequence is Beta-galactosidase bgaB (672 aa).

Residue R109 coordinates substrate. Position 113 (C113) interacts with Zn(2+). Substrate is bound at residue N147. The active-site Proton donor is the E148. C156, C158, and C161 together coordinate Zn(2+). E303 (nucleophile) is an active-site residue. Substrate-binding positions include W311 and 351–354 (EKFH).

The protein belongs to the glycosyl hydrolase 42 family.

It catalyses the reaction Hydrolysis of terminal non-reducing beta-D-galactose residues in beta-D-galactosides.. With respect to regulation, by divalent metal ions. Fe(2+), Zn(2+), Cu(2+), Pb(2+) and Sn(2+) inhibit 52, 76.6, 85.3, 100 and 100% of the enzyme activity, respectively. Other metal cations and EDTA do not inhibit this enzyme. Thiol reagents 2-mercaptoethanol and dithiothreitol have no effect on the activity. Sulfhydryl group-blocking reagents p-chloromercuribenzoic acid and iodoacetic acid inhibit 86.2 and 74% of the enzyme activity, respectively. Functionally, hydrolyzes 6-bromo-2-naphthyl-beta-D-galactopyranoside and o-nitrophenyl-beta-D-galactopyranoside (ONPG). Possesses a high level of transgalactosylation activity. Hydrolyzes lactose in milk. This is Beta-galactosidase bgaB (bgaB) from Geobacillus kaustophilus.